The primary structure comprises 224 residues: Pyridoxal 5'-phosphate synthase subunit PdxT (224 aa).

55-57 contacts L-glutamine; sequence GES. Cys-87 acts as the Nucleophile in catalysis. L-glutamine is bound by residues Arg-113 and 142-143; that span reads IR. Active-site charge relay system residues include His-178 and Glu-180.

Belongs to the glutaminase PdxT/SNO family. In terms of assembly, in the presence of PdxS, forms a dodecamer of heterodimers. Only shows activity in the heterodimer.

It carries out the reaction aldehydo-D-ribose 5-phosphate + D-glyceraldehyde 3-phosphate + L-glutamine = pyridoxal 5'-phosphate + L-glutamate + phosphate + 3 H2O + H(+). The enzyme catalyses L-glutamine + H2O = L-glutamate + NH4(+). It participates in cofactor biosynthesis; pyridoxal 5'-phosphate biosynthesis. Functionally, catalyzes the hydrolysis of glutamine to glutamate and ammonia as part of the biosynthesis of pyridoxal 5'-phosphate. The resulting ammonia molecule is channeled to the active site of PdxS. This chain is Pyridoxal 5'-phosphate synthase subunit PdxT, found in Syntrophus aciditrophicus (strain SB).